The chain runs to 423 residues: Glucose-1-phosphate adenylyltransferase (423 aa).

Alpha-D-glucose 1-phosphate-binding positions include Tyr-108, Gly-173, 188-189 (EK), and Ser-207.

This sequence belongs to the bacterial/plant glucose-1-phosphate adenylyltransferase family. In terms of assembly, homotetramer.

The catalysed reaction is alpha-D-glucose 1-phosphate + ATP + H(+) = ADP-alpha-D-glucose + diphosphate. Its pathway is glycan biosynthesis; glycogen biosynthesis. Its function is as follows. Involved in the biosynthesis of ADP-glucose, a building block required for the elongation reactions to produce glycogen. Catalyzes the reaction between ATP and alpha-D-glucose 1-phosphate (G1P) to produce pyrophosphate and ADP-Glc. The sequence is that of Glucose-1-phosphate adenylyltransferase from Francisella tularensis subsp. mediasiatica (strain FSC147).